A 200-amino-acid chain; its full sequence is Pyridoxine/pyridoxamine 5'-phosphate oxidase (200 aa).

Residues 48 to 53, 63 to 64, Lys-70, and Gln-92 each bind FMN; these read RMVLLK and YT. Position 53 (Lys-53) interacts with substrate. Residues Tyr-110, Arg-114, and Ser-118 each coordinate substrate. FMN is bound by residues 127–128 and Trp-171; that span reads QS. 177-179 serves as a coordination point for substrate; sequence RLH. Arg-181 contributes to the FMN binding site.

This sequence belongs to the pyridoxamine 5'-phosphate oxidase family. In terms of assembly, homodimer. The cofactor is FMN.

The enzyme catalyses pyridoxamine 5'-phosphate + O2 + H2O = pyridoxal 5'-phosphate + H2O2 + NH4(+). It carries out the reaction pyridoxine 5'-phosphate + O2 = pyridoxal 5'-phosphate + H2O2. It functions in the pathway cofactor metabolism; pyridoxal 5'-phosphate salvage; pyridoxal 5'-phosphate from pyridoxamine 5'-phosphate: step 1/1. The protein operates within cofactor metabolism; pyridoxal 5'-phosphate salvage; pyridoxal 5'-phosphate from pyridoxine 5'-phosphate: step 1/1. Its function is as follows. Catalyzes the oxidation of either pyridoxine 5'-phosphate (PNP) or pyridoxamine 5'-phosphate (PMP) into pyridoxal 5'-phosphate (PLP). In Cereibacter sphaeroides (strain ATCC 17023 / DSM 158 / JCM 6121 / CCUG 31486 / LMG 2827 / NBRC 12203 / NCIMB 8253 / ATH 2.4.1.) (Rhodobacter sphaeroides), this protein is Pyridoxine/pyridoxamine 5'-phosphate oxidase.